An 803-amino-acid chain; its full sequence is Leucine--tRNA ligase (803 aa).

The short motif at 40 to 51 is the 'HIGH' region element; it reads PYPSGQGLHVGH. Positions 575–579 match the 'KMSKS' region motif; sequence KMSKS. Position 578 (Lys-578) interacts with ATP.

Belongs to the class-I aminoacyl-tRNA synthetase family.

The protein resides in the cytoplasm. It catalyses the reaction tRNA(Leu) + L-leucine + ATP = L-leucyl-tRNA(Leu) + AMP + diphosphate. The chain is Leucine--tRNA ligase from Lacticaseibacillus paracasei (strain ATCC 334 / BCRC 17002 / CCUG 31169 / CIP 107868 / KCTC 3260 / NRRL B-441) (Lactobacillus paracasei).